The chain runs to 1392 residues: MAALLRPARWLLGAAAAPRLPLSLRLPAGVPGRLSSVVRVAAVGSRPAAGERLSQARLYAIVAEKRDLQEEPAPVRKNSSQFDWALMRLDNSVRRTGRITKGLLQRVFESTCSSGSPGSNQALLLLRSCGSLLPELSLAERTEFAHKIWDKLQQLGVVYDVSHYNALLKVYLQNEYKFSPTDFLAKMEGANIQPNRVTYQRLIAAYCNVGDIEGASKILGFMKTKDLPITEAVFSALVTGHARAGDMENAENILTVMKQAGIEPGPDTYLALLNAHAERGDIGQVRQILEKVEKSDHYFMDRDFLQVIFSFSKAGYPQYVSEILEKITYERRSIPDAMNLILFLATEKLEDTAFQVLLALPLSKDESSDNFGSFFLRHCVTLDLPPEKLIDYCRRLRDAKLHSSSLQFTLHCALQANRTALAKAVMEALREEGFPIRPHYFWPLLAGHQKTKNVQGIIDILKIMNKVGVDPDQETYINYVFPCFDSAQSVRAALQENECLLASSTFAQAEVKNEAINGNLQNILSFLESNTLPFSFSSLRNSLILGFRRSMNIDLWSKITELLYKDERYCSKPPGPAEAVGYFLYNLIDSMSDSEVQAKEERLRQYFHQLQEMNVKVPENIYKGICNLLNTYHVPELIKDIKVLVDREKVDSQKTSQVTSSDLESTLEKLKAEGQPVGSALKQLLLLLCSEENMQKALEVKAKYESDMVIGGYAALINLCCRHDNAEDAWNLKQEVDRLDASAILDTAKYVALVKVLGKHSRLQDAINILKEMKEKDVVIKDATVLSFFHILNGAALRGEIETVKQLHEAIVTLGLAKPSSNISFPLVTVHLEKGDLPAALEASIACHKKYKVLPRIHDVLCKLVEKGETDLIQKAMDFVSQEQGEMTMLYDLFFAFLQTGNYKEAKKIIETPGIRARPTRLQWFCDRCIASNQVEALEKLVELTEKLFECDRDQMYYNLLKLYKISSDWQRADAAWTKMQEENIIPRERTLRLLAEILKTSNQEVPFDVPELWFGDDRPSLSPSSRSAGEDVTEKTLLSNCKLKKSKDAYNIFLKAEKQNVVFSSETYSTLIGLLLSKDDFTQAMHVKDFAETHIKGFTLNDAANSLLIIRQVRRDYLKGALATLRAALDLKQVPSQIAVTRLIQALALKGDVESIEAIQRMVAGLDTIGLSKMVFINNIALAQMKNNKLDAAIENIEHLLASENQAIEPQYFGLSYLFRKVIEEQMEPALEKLSIMSERMANQFALYKPVTDLFLQLVDSGKVDEARALLERCGAIAEQSSLLSVFCLRTSQKPKKAPVLKTLLELIPELRDNDKVYSCSMKSYALDKDVASAKALYEYLTAKNLKLDDLFLKRYAALLKDVGEPVPFPEPPESFAFYIKQLKEARESPS.

A mitochondrion-targeting transit peptide spans 1–59 (MAALLRPARWLLGAAAAPRLPLSLRLPAGVPGRLSSVVRVAAVGSRPAAGERLSQARLY). PPR repeat units lie at residues 125 to 159 (LLRS…GVVY), 160 to 194 (DVSH…NIQP), 195 to 229 (NRVT…DLPI), 230 to 264 (TEAV…GIEP), 265 to 299 (GPDT…DHYF), 300 to 334 (MDRD…RRSI), 402 to 436 (HSSS…GFPI), 437 to 471 (RPHY…GVDP), 677 to 708 (VGSA…ESDM), 709 to 745 (VIGG…SAIL), 746 to 783 (DTAK…IKDA), 784 to 820 (TVLS…AKPS), 821 to 856 (SNIS…VLPR), and 953 to 987 (RDQM…NIIP). Residues K151, K186, and K225 each carry the N6-acetyllysine modification. At K291 the chain carries N6-acetyllysine. K462 is modified (N6-acetyllysine). Residue K749 is modified to N6-acetyllysine. The tract at residues 931–1050 (ASNQVEALEK…NCKLKKSKDA (120 aa)) is RNA-binding. Phosphoserine occurs at positions 1025, 1026, and 1028. PPR repeat units lie at residues 1030–1064 (GEDV…NVVF), 1065–1101 (SSET…GFTL), 1102–1136 (NDAA…KQVP), 1137–1175 (SQIA…LSKM), 1176–1210 (VFIN…QAIE), and 1315–1349 (NDKV…NLKL). The residue at position 1137 (S1137) is a Phosphoserine.

Component of mRNP complexes associated with HNRPA1. Component of the complex, at least composed of LRPPRC, BECN1 and BCL2; the interactions prevent BECN1 from forming an autophagy-inducing complex with PIK3C3. Interacts with CECR2, HEBP2, MAP1S and UXT. Interacts with PPARGC1A. Interacts with FOXO1. Interacts (via N-terminus) with EIF4E; the interaction promotes association of EIF4E with 4ESE-containing mRNAs. Interacts with exportin XPO1/CRM1; interacts both alone and in complex with EIF4E and 4ESE-containing mRNAs to form an EIF4E-dependent mRNA export complex. Interacts with importin IPO8; the interaction occurs when LRPPRC is in its RNA-free form and returns LRPPRC to the nucleus for further export rounds. Interacts with BECN1. Strongly expressed in heart, liver and kidney. Weakly expressed in brain, skeletal muscle and testes.

It is found in the mitochondrion. The protein localises to the nucleus. It localises to the nucleoplasm. The protein resides in the nucleus inner membrane. Its subcellular location is the nucleus outer membrane. Functionally, may play a role in RNA metabolism in both nuclei and mitochondria. In the nucleus binds to HNRPA1-associated poly(A) mRNAs and is part of nmRNP complexes at late stages of mRNA maturation which are possibly associated with nuclear mRNA export. Positively modulates nuclear export of mRNAs containing the EIF4E sensitivity element (4ESE) by binding simultaneously to both EIF4E and the 4ESE and acting as a platform for assembly for the RNA export complex. Also binds to exportin XPO1/CRM1 to engage the nuclear pore and traffic the bound mRNAs to the cytoplasm. May bind mature mRNA in the nucleus outer membrane. In mitochondria binds to poly(A) mRNA. Plays a role in translation or stability of mitochondrially encoded cytochrome c oxidase (COX) subunits. May be involved in transcription regulation. Cooperates with PPARGC1A to regulate certain mitochondrially encoded genes and gluconeogenic genes and may regulate docking of PPARGC1A to transcription factors. Seems to be involved in the transcription regulation of the multidrug-related genes MDR1 and MVP. Part of a nuclear factor that binds to the invMED1 element of MDR1 and MVP gene promoters. Binds single-stranded DNA. Required for maintaining mitochondrial potential. Suppresses the initiation of basal levels of autophagy and mitophagy by sustaining BCL2 levels. In Mus musculus (Mouse), this protein is Leucine-rich PPR motif-containing protein, mitochondrial (Lrpprc).